A 37-amino-acid polypeptide reads, in one-letter code: Large ribosomal subunit protein bL36c (37 aa).

Belongs to the bacterial ribosomal protein bL36 family.

Its subcellular location is the plastid. This chain is Large ribosomal subunit protein bL36c, found in Cuscuta reflexa (Southern Asian dodder).